The chain runs to 366 residues: Aminomethyltransferase (366 aa).

Belongs to the GcvT family. In terms of assembly, the glycine cleavage system is composed of four proteins: P, T, L and H.

It catalyses the reaction N(6)-[(R)-S(8)-aminomethyldihydrolipoyl]-L-lysyl-[protein] + (6S)-5,6,7,8-tetrahydrofolate = N(6)-[(R)-dihydrolipoyl]-L-lysyl-[protein] + (6R)-5,10-methylene-5,6,7,8-tetrahydrofolate + NH4(+). Functionally, the glycine cleavage system catalyzes the degradation of glycine. The polypeptide is Aminomethyltransferase (Bordetella bronchiseptica (strain ATCC BAA-588 / NCTC 13252 / RB50) (Alcaligenes bronchisepticus)).